Reading from the N-terminus, the 178-residue chain is Large ribosomal subunit protein bL17 (178 aa).

Low complexity-rich tracts occupy residues 123-139 (KAPA…NTAT) and 151-160 (EDAAAQAPVA). Residues 123–178 (KAPASAADAKAQINTATEAKEAEPEAPAEDAAAQAPVADEQKAAEVDEKAEEKPEA) form a disordered region. Residues 161–178 (DEQKAAEVDEKAEEKPEA) show a composition bias toward basic and acidic residues.

The protein belongs to the bacterial ribosomal protein bL17 family. In terms of assembly, part of the 50S ribosomal subunit. Contacts protein L32.

The chain is Large ribosomal subunit protein bL17 from Cutibacterium acnes (strain DSM 16379 / KPA171202) (Propionibacterium acnes).